We begin with the raw amino-acid sequence, 304 residues long: N-acetylmuramic acid 6-phosphate etherase 1 (304 aa).

Polar residues predominate over residues 1-10 (MENSHLGSLT). The interval 1–20 (MENSHLGSLTTERRNERSKR) is disordered. The 164-residue stretch at 58–221 (AVGSLKKGGR…STAAMIKMGK (164 aa)) folds into the SIS domain. The active-site Proton donor is the Glu-86. Glu-117 is an active-site residue.

The protein belongs to the GCKR-like family. MurNAc-6-P etherase subfamily. In terms of assembly, homodimer.

The catalysed reaction is N-acetyl-D-muramate 6-phosphate + H2O = N-acetyl-D-glucosamine 6-phosphate + (R)-lactate. Its pathway is amino-sugar metabolism; N-acetylmuramate degradation. Its function is as follows. Specifically catalyzes the cleavage of the D-lactyl ether substituent of MurNAc 6-phosphate, producing GlcNAc 6-phosphate and D-lactate. The protein is N-acetylmuramic acid 6-phosphate etherase 1 of Bacillus licheniformis (strain ATCC 14580 / DSM 13 / JCM 2505 / CCUG 7422 / NBRC 12200 / NCIMB 9375 / NCTC 10341 / NRRL NRS-1264 / Gibson 46).